We begin with the raw amino-acid sequence, 434 residues long: Glutamate-1-semialdehyde 2,1-aminomutase 1 (434 aa).

Lysine 270 is modified (N6-(pyridoxal phosphate)lysine).

This sequence belongs to the class-III pyridoxal-phosphate-dependent aminotransferase family. HemL subfamily. In terms of assembly, homodimer. Pyridoxal 5'-phosphate serves as cofactor.

The protein localises to the cytoplasm. It carries out the reaction (S)-4-amino-5-oxopentanoate = 5-aminolevulinate. The protein operates within porphyrin-containing compound metabolism; protoporphyrin-IX biosynthesis; 5-aminolevulinate from L-glutamyl-tRNA(Glu): step 2/2. In Bacillus anthracis (strain CDC 684 / NRRL 3495), this protein is Glutamate-1-semialdehyde 2,1-aminomutase 1.